A 514-amino-acid polypeptide reads, in one-letter code: MSCPIDKRRPLIAFLRRLRDLGQPPRSVTSKAHVKRAPKEVPLCPLMTDGETRNVTSLPGPTNWPLLGSLLEIFWKGGLKKQHDTLAEYHKKYGQIFRMKLGSFDSVHLGSPSLLEALYRTESAHPQRLEIKPWKAYRDHRNEAYGLMILEGQEWQRVRSAFQKKLMKPVEIMKLDKKINEVLADFMGQIDELRDERGRIQDLYSELNKWSFESICLVLYEKRFGLLQKDTEEEALTFIAAIKTMMSTFGKMMVTPVELHKRLNTKVWQAHTLAWDTIFKSVKPCIDHRLERYSQQPGADFLCDIYQQDHLSKKELYAAVTELQLAAVETTANSLMWILYNLSRNPQVQQRLLREIQSVLPDNQTPRAEDVRNMPYLKACLKESMRLTPSVPFTTRTLDKPTVLGEYTLPKGTVLTLNTQVLGSSEDNFEDADKFRPERWLEKEKKINPFAHLPFGVGKRMCIGRRLAELQLHLALCWIIQKYNIVATDSEPVEMLHLGILVPSRELPIAFCPR.

The transit peptide at 1-35 directs the protein to the mitochondrion; sequence MSCPIDKRRPLIAFLRRLRDLGQPPRSVTSKAHVK. Cys-462 serves as a coordination point for heme.

It belongs to the cytochrome P450 family. The cofactor is heme.

The protein localises to the mitochondrion. It catalyses the reaction calcitriol + 2 reduced [adrenodoxin] + O2 + 2 H(+) = calcitetrol + 2 oxidized [adrenodoxin] + H2O. It carries out the reaction calcitetrol + 2 reduced [adrenodoxin] + O2 + 2 H(+) = (1S)-1,25-dihydroxy-24-oxocalciol + 2 oxidized [adrenodoxin] + 2 H2O. The catalysed reaction is (1S)-1,25-dihydroxy-24-oxocalciol + 2 reduced [adrenodoxin] + O2 + 2 H(+) = (1S)-1,23,25-trihydroxy-24-oxocalciol + 2 oxidized [adrenodoxin] + H2O. The enzyme catalyses (1S)-1,23-dihydroxy-24,25,26,27-tetranorcalciol + 2 reduced [adrenodoxin] + O2 + 2 H(+) = (1S)-1-hydroxy-23-oxo-24,25,26,27-tetranorcalciol + 2 oxidized [adrenodoxin] + 2 H2O. It catalyses the reaction (1S)-1-hydroxy-23-oxo-24,25,26,27-tetranorcalciol + 2 reduced [adrenodoxin] + O2 + H(+) = calcitroate + 2 oxidized [adrenodoxin] + H2O. It carries out the reaction calcidiol + 2 reduced [adrenodoxin] + O2 + 2 H(+) = secalciferol + 2 oxidized [adrenodoxin] + H2O. The catalysed reaction is secalciferol + 2 reduced [adrenodoxin] + O2 + 2 H(+) = 25-hydroxy-24-oxocalciol + 2 oxidized [adrenodoxin] + 2 H2O. The enzyme catalyses 25-hydroxy-24-oxocalciol + 2 reduced [adrenodoxin] + O2 + 2 H(+) = 23S,25-dihydroxy-24-oxocholecalciferol + 2 oxidized [adrenodoxin] + H2O. It catalyses the reaction 20S,23-dihydroxycholecalciferol + 2 reduced [adrenodoxin] + O2 + 2 H(+) = 20S,23,25-trihydroxycholecalciferol + 2 oxidized [adrenodoxin] + H2O. It carries out the reaction 20S,23-dihydroxycholecalciferol + 2 reduced [adrenodoxin] + O2 + 2 H(+) = 20S,23,24-trihydroxycholecalciferol + 2 oxidized [adrenodoxin] + H2O. The catalysed reaction is 20S-hydroxycholecalciferol + 2 reduced [adrenodoxin] + O2 + 2 H(+) = 20S,25-dihydroxycholecalciferol + 2 oxidized [adrenodoxin] + H2O. The enzyme catalyses 20S-hydroxycholecalciferol + 2 reduced [adrenodoxin] + O2 + 2 H(+) = 20S,24S-dihydroxycholecalciferol + 2 oxidized [adrenodoxin] + H2O. It catalyses the reaction 20S-hydroxycholecalciferol + 2 reduced [adrenodoxin] + O2 + 2 H(+) = 20S,24R-dihydroxycholecalciferol + 2 oxidized [adrenodoxin] + H2O. Its function is as follows. A cytochrome P450 monooxygenase with a key role in vitamin D catabolism and calcium homeostasis. Via C24-oxidation pathway, catalyzes the inactivation of both the vitamin D precursor calcidiol (25-hydroxyvitamin D(3)) and the active hormone calcitriol (1-alpha,25-dihydroxyvitamin D(3)). With initial hydroxylation at C-24 (via C24-oxidation pathway), performs a sequential 6-step oxidation of calcitriol leading to the formation of the biliary metabolite calcitroic acid. Hydroxylates at C-24 or C-25 other vitamin D active metabolites, such as CYP11A1-derived secosteroids 20S-hydroxycholecalciferol and 20S,23-dihydroxycholecalciferol. Mechanistically, uses molecular oxygen inserting one oxygen atom into a substrate, and reducing the second into a water molecule, with two electrons provided by NADPH via FDXR/adrenodoxin reductase and FDX1/adrenodoxin. In Mus musculus (Mouse), this protein is 1,25-dihydroxyvitamin D(3) 24-hydroxylase, mitochondrial.